The sequence spans 762 residues: 5-methyltetrahydropteroyltriglutamate--homocysteine methyltransferase (762 aa).

Residues R17–K20 and K111 each bind 5-methyltetrahydropteroyltri-L-glutamate. L-homocysteine contacts are provided by residues I435–S437 and E488. Residues I435–S437 and E488 contribute to the L-methionine site. 5-methyltetrahydropteroyltri-L-glutamate contacts are provided by residues R519–C520 and W565. D603 is a binding site for L-homocysteine. D603 provides a ligand contact to L-methionine. A 5-methyltetrahydropteroyltri-L-glutamate-binding site is contributed by E609. 3 residues coordinate Zn(2+): H645, C647, and E669. H698 functions as the Proton donor in the catalytic mechanism. Residue C730 coordinates Zn(2+).

It belongs to the vitamin-B12 independent methionine synthase family. It depends on Zn(2+) as a cofactor.

The enzyme catalyses 5-methyltetrahydropteroyltri-L-glutamate + L-homocysteine = tetrahydropteroyltri-L-glutamate + L-methionine. It participates in amino-acid biosynthesis; L-methionine biosynthesis via de novo pathway; L-methionine from L-homocysteine (MetE route): step 1/1. Catalyzes the transfer of a methyl group from 5-methyltetrahydrofolate to homocysteine resulting in methionine formation. The polypeptide is 5-methyltetrahydropteroyltriglutamate--homocysteine methyltransferase (Bacillus anthracis (strain A0248)).